A 561-amino-acid chain; its full sequence is Melanopsin-A (561 aa).

Over 1–34 the chain is Extracellular; it reads MRPSTDTMEADTAATHRNFITKVDVPDHAHYTVA. The helical transmembrane segment at 35 to 55 threads the bilayer; sequence FFVSVIGTLGVTGNALVQFAF. The Cytoplasmic segment spans residues 56-68; the sequence is YSNKKLRNLPNYF. Residues 69-89 traverse the membrane as a helical segment; sequence IMNQAASDFLMAFTQSPFFFI. Over 90–104 the chain is Extracellular; sequence NCLNREWIFGELGCK. Cys103 and Cys181 are disulfide-bonded. The helical transmembrane segment at 105–125 threads the bilayer; it reads LYAFLGALFGITSMINLLAIS. Over 126-148 the chain is Cytoplasmic; that stretch reads LDRYMVITRPLEAMKWNSKRRTT. The helical transmembrane segment at 149-169 threads the bilayer; it reads IAILLVWLYSLAWSLAPLVGW. The Extracellular segment spans residues 170 to 201; it reads SSYIPEGLRTSCTWDYVTYTASNRSYTMMLCC. An N-linked (GlcNAc...) asparagine glycan is attached at Asn192. The chain crosses the membrane as a helical span at residues 202-222; that stretch reads FVFFIPLAIISYCYLFMFLAI. Over 223–255 the chain is Cytoplasmic; sequence RKTSRDVERLGIQVRKSTIIRQKSIRTEWKLAK. A helical membrane pass occupies residues 256-276; it reads IAFVVIVVYVLSWSPYACVTM. Residues 277 to 291 lie on the Extracellular side of the membrane; it reads ISWSGHANILSPYSK. Residues 292-312 traverse the membrane as a helical segment; that stretch reads TVPAVIAKASTIYNPFIYAII. Position 299 is an N6-(retinylidene)lysine (Lys299). The Cytoplasmic segment spans residues 313–561; that stretch reads HQKYRKTLAD…EDSLEDNDVV (249 aa). Disordered stretches follow at residues 359–385, 404–448, 479–503, and 539–561; these read AIRRQSTAASRHASASKTAAGASSYSS, ASFR…SATH, NGLSDAGKKTTVANGTPGNHKSKSA, and SFTDDGSVGTVVDEDSLEDNDVV. Low complexity predominate over residues 371–385; that stretch reads ASASKTAAGASSYSS. Residues 550-561 show a composition bias toward acidic residues; sequence VDEDSLEDNDVV.

Belongs to the G-protein coupled receptor 1 family. Opsin subfamily. In terms of tissue distribution, expressed in retina and brain. Expressed in a subset of retinal horizontal cells as well as a small number of amacrine and retinal ganglion cells. Also expressed in a small population of neurons in the suprachiasmatic nucleus (SNC).

The protein resides in the cell membrane. Photoreceptor implicated in non-image-forming responses to light. The protein is Melanopsin-A (opn4a) of Gadus morhua (Atlantic cod).